The following is a 417-amino-acid chain: Metal-binding activator 1 (417 aa).

The segment at residues 1-40 (MIIFNGNKYACASCIRGHRSSTCRHSHRMLIKVRTRGRPS) is a DNA-binding region (copper-fist). Cysteine 11, cysteine 14, cysteine 23, and histidine 25 together coordinate Zn(2+). Disordered stretches follow at residues 128 to 198 (FLRK…IFTP) and 216 to 242 (YNSSVPGAHDSSETLTPQSTTTIAAPH). Position 143 is a phosphoserine (serine 143). A compositionally biased stretch (basic and acidic residues) spans 153–178 (SEKKERSRLQQEPIRHFSNCCKKDKS). Polar residues-rich tracts occupy residues 179–190 (QNPASNGKTNKA) and 228–238 (ETLTPQSTTTI). 2 consecutive repeat copies span residues 264 to 279 (CSCEDESCPCVNCLIH) and 322 to 337 (CICPPDNCTCDGCFSH). A 2 X 16 AA repeat of C-X-C-X(4)-C-X-C-X-X-C-X-X-H region spans residues 264–337 (CSCEDESCPC…NCTCDGCFSH (74 aa)).

The protein localises to the nucleus. Functionally, regulatory protein involved in Cu/Fe utilization and stress resistance. Involved in basal level transcription of FRE1 and H(2)O(2)-induced transcription of CTT1. Regulates the transcription of CTR1 and CTR3 via the copper ion responsive elements in their promoters. Required for degradation of CTR1. The protein is Metal-binding activator 1 (MAC1) of Saccharomyces cerevisiae (strain ATCC 204508 / S288c) (Baker's yeast).